A 142-amino-acid polypeptide reads, in one-letter code: Large ribosomal subunit protein uL13 (142 aa).

Belongs to the universal ribosomal protein uL13 family. In terms of assembly, part of the 50S ribosomal subunit.

In terms of biological role, this protein is one of the early assembly proteins of the 50S ribosomal subunit, although it is not seen to bind rRNA by itself. It is important during the early stages of 50S assembly. The polypeptide is Large ribosomal subunit protein uL13 (Serratia proteamaculans (strain 568)).